Consider the following 120-residue polypeptide: Large ribosomal subunit protein bL20 (120 aa).

It belongs to the bacterial ribosomal protein bL20 family.

In terms of biological role, binds directly to 23S ribosomal RNA and is necessary for the in vitro assembly process of the 50S ribosomal subunit. It is not involved in the protein synthesizing functions of that subunit. This chain is Large ribosomal subunit protein bL20, found in Desulfitobacterium hafniense (strain DSM 10664 / DCB-2).